Reading from the N-terminus, the 188-residue chain is MIVIMDNGGQYVHRIWRTLRYIGVESKIIPNTTPLEDIKAMNPSGIIFSGGPSLENTGNCEKILENYDEFNVPILGICLGHQLIAKFFGGKVGRGEKAEYSLVEIEILEEDEIFKGLPRKLRVWESHMDEVKELPPNFKVLARSETCPIEAMKHEELPIYGVQFHPEVAHTEHGEDILRNFAKLCGEL.

In terms of domain architecture, Glutamine amidotransferase type-1 spans 1 to 188 (MIVIMDNGGQ…RNFAKLCGEL (188 aa)). Cys78 serves as the catalytic Nucleophile. Residues His165 and Glu167 contribute to the active site.

In terms of assembly, heterodimer composed of a glutamine amidotransferase subunit (A) and a GMP-binding subunit (B).

It carries out the reaction XMP + L-glutamine + ATP + H2O = GMP + L-glutamate + AMP + diphosphate + 2 H(+). The protein operates within purine metabolism; GMP biosynthesis; GMP from XMP (L-Gln route): step 1/1. Catalyzes the synthesis of GMP from XMP. This is GMP synthase [glutamine-hydrolyzing] subunit A from Pyrococcus abyssi (strain GE5 / Orsay).